The sequence spans 250 residues: 5'-nucleotidase SurE (250 aa).

Residues aspartate 8, aspartate 9, serine 40, and asparagine 94 each contribute to the a divalent metal cation site.

Belongs to the SurE nucleotidase family. It depends on a divalent metal cation as a cofactor.

Its subcellular location is the cytoplasm. The enzyme catalyses a ribonucleoside 5'-phosphate + H2O = a ribonucleoside + phosphate. In terms of biological role, nucleotidase that shows phosphatase activity on nucleoside 5'-monophosphates. The protein is 5'-nucleotidase SurE of Wolbachia sp. subsp. Brugia malayi (strain TRS).